We begin with the raw amino-acid sequence, 2507 residues long: Highly reducing polyketide synthase lcsB (2507 aa).

Residues 2–393 (AEPIAVVGMA…GVNAHVIVES (392 aa)) form the Ketosynthase family 3 (KS3) domain. The disordered stretch occupies residues 399–501 (NHDRGLSNGS…RNGYSGDDVE (103 aa)). Composition is skewed to polar residues over residues 405-414 (SNGSTTSSSP) and 470-488 (NDTPQSRSTPSNGDQTSHT). A malonyl-CoA:ACP transacylase (MAT) domain region spans residues 581 to 900 (WVFTGQGAQW…DESLLQLAGK (320 aa)). The segment at 953–1080 (HELLGSRVTE…GEARASVDKA (128 aa)) is N-terminal hotdog fold. The interval 953 to 1232 (HELLGSRVTE…FKASALTRSD (280 aa)) is dehydratase (DH) domain. A PKS/mFAS DH domain is found at 953–1234 (HELLGSRVTE…ASALTRSDDE (282 aa)). Histidine 984 functions as the Proton acceptor; for dehydratase activity in the catalytic mechanism. Residues 1092–1234 (ARTVDANEWY…ASALTRSDDE (143 aa)) are C-terminal hotdog fold. Catalysis depends on aspartate 1151, which acts as the Proton donor; for dehydratase activity. A methyltransferase (CMet) domain region spans residues 1402–1570 (LGHTNPRLRI…EMVAAGFAEP (169 aa)). Residues 1793 to 2105 (GLLHTMGWSQ…GGRHIGKIIV (313 aa)) form an enoyl reductase (ER) (ER) domain region. Residues 2130-2303 (SYLLVGGLGG…ASVIDIGVMG (174 aa)) are ketoreductase (KR) domain. The 79-residue stretch at 2425-2503 (EESTVIIATA…SLGDYIRTAL (79 aa)) folds into the Carrier domain. An O-(pantetheine 4'-phosphoryl)serine modification is found at serine 2463.

Its pathway is secondary metabolite biosynthesis. Its function is as follows. Highly reducing polyketide synthase; part of the gene cluster that mediates the biosynthesis of the lipopeptide antibiotics leucinostatins that show extensive biological activities, including antimalarial, antiviral, antibacterial, antifungal, and antitumor activities, as well as phytotoxic. Leucinostatin A contains nine amino acid residues, including the unusual amino acid 4-methyl-L-proline (MePro), 2-amino-6-hydroxy-4-methyl-8-oxodecanoic acid (AHyMeOA), 3-hydroxyleucine (HyLeu), alpha-aminoisobutyric acid (AIB), beta-Ala, a 4-methylhex-2-enoic acid at the N-terminus as well as a N1,N1-dimethylpropane-1,2-diamine (DPD) at the C-terminus. The biosynthesis of leucinostatins is probably initiated with the assembly of 4-methylhex-2-enoic acid by a reducing PKS. Two reducing polyketide synthases, lcsB and lcsC, have been identified in the cluster and it is not clear which is the one that assembles 4-methylhex-2-enoic acid since both contain KS, AT, DH, cMT, ER, KR and ACP domains. The polyketide residue might be transferred to the NRPS lcsA, mediated by two additional enzymes, the acyl-CoA ligase lcsD and the thioesterase lcsE. The linear polyketide carboxylic acid, which is released from PKS, is converted to a CoA thioester by lcsD, and then lcsE hydrolyzes the thiol bond and shuttles the polyketide intermediate to lcsA. The C domain of the first module catalyzed the condensation of 4-methylhex-2-enoic acid and MePro carried by domain A1, followed by successive condensations of nine amino acids to trigger the elongation of the linear peptide. A5 and A6 domains of lcsA are proposed to incorporate leucine, A2 AHyMeOA, and A3 incorporates HyLeu. A4, A7 and A8 incorporate AIB. The AHyMeOA in leucinostatin A activated by the A2 might be produced by the second PKS (lcsB or lcsC) present within the cluster. The MePro is probably produced via leucine cyclization and may originate from a separate pathway, independent of the cluster. Another nonproteinogenic amino acid, beta-Ala, could be produced by an aspartic acid decarboxylase also localized outside of the cluster. Two candidates are VFPBJ_01400 and VFPBJ_10476. The final peptide scaffold may be released by the NAD(P)H-dependent thioester reductase (TE) at the C-terminal region of lcsA. Transamination of the lcsA product by the transaminase lcsP may produce DPD at the C-terminus. Further hydroxylation steps performed alternatively by the cytochrome P450 monooxygenases lcsI, lcsK andr lcsN then yield the non-methylated leucinostatins precursor. It is also possible that leucines can be hydroxylated prior to their incorporation into the peptide. Varying extents of methylation then lead to the formation of leucinostatins A and B. The chain is Highly reducing polyketide synthase lcsB from Purpureocillium lilacinum (Paecilomyces lilacinus).